The sequence spans 94 residues: Large ribosomal subunit protein bL28A (94 aa).

The disordered stretch occupies residues 63–94 (GHRGRRRAARAGSAPAHFARQAGSSLRTAAIL). Residues 72 to 82 (RAGSAPAHFAR) are compositionally biased toward low complexity. Positions 84 to 94 (AGSSLRTAAIL) are enriched in polar residues.

The protein belongs to the bacterial ribosomal protein bL28 family.

The protein is Large ribosomal subunit protein bL28A (rpmB1) of Mycobacterium bovis (strain ATCC BAA-935 / AF2122/97).